The following is a 426-amino-acid chain: Serine hydroxymethyltransferase (426 aa).

Residues leucine 118 and 122 to 124 (GHL) contribute to the (6S)-5,6,7,8-tetrahydrofolate site. Lysine 227 carries the N6-(pyridoxal phosphate)lysine modification.

The protein belongs to the SHMT family. As to quaternary structure, homodimer. The cofactor is pyridoxal 5'-phosphate.

It is found in the cytoplasm. It carries out the reaction (6R)-5,10-methylene-5,6,7,8-tetrahydrofolate + glycine + H2O = (6S)-5,6,7,8-tetrahydrofolate + L-serine. It functions in the pathway one-carbon metabolism; tetrahydrofolate interconversion. The protein operates within amino-acid biosynthesis; glycine biosynthesis; glycine from L-serine: step 1/1. In terms of biological role, catalyzes the reversible interconversion of serine and glycine with tetrahydrofolate (THF) serving as the one-carbon carrier. This reaction serves as the major source of one-carbon groups required for the biosynthesis of purines, thymidylate, methionine, and other important biomolecules. Also exhibits THF-independent aldolase activity toward beta-hydroxyamino acids, producing glycine and aldehydes, via a retro-aldol mechanism. This chain is Serine hydroxymethyltransferase, found in Mycobacterium leprae (strain Br4923).